We begin with the raw amino-acid sequence, 258 residues long: Oxidoreductase fscI (258 aa).

5 residues coordinate NADP(+): Leu34, Arg59, Asp82, Asn109, and Lys141. The active-site Proton donor is Ser163. Arg193 is an NADP(+) binding site.

Belongs to the short-chain dehydrogenases/reductases (SDR) family.

The protein operates within secondary metabolite biosynthesis. Oxidoreductase; part of the fragmented gene cluster that mediates the biosynthesis of fusarochromene, a tryptophan-derived metabolite closely related to a group of mycotoxins including fusarochromanone. Within the pathway, fscI catalyzes the formation of the chromene ring from the prenyl moity added by the prenyltransferase fscG. The first step of the pathway is the epimerization of L-tryptophan to D-tryptophan in the presence of the NRPS-like tryptophan epimerase fscC. D-tryptophan is subsequently hydroxylated by the tryptophan 6-hydroxylase fscE to yield 6-hydroxytryptophan. The pyrrole ring undergoes cleavaged by the tryptophan 2,3-dioxygenase fscD and is finally converted to 4-hydroxykyrunenine by the hydrolase fscH. The NRPS-like oxidoreductase fscA reduces the carboxyl group to primary alcohol and the DMATS-type prenyltransferase fscG performs prenylation, followed by the formation of a chromene ring catalyzed by the oxidoreductase fscI, which leads to desacetylfusarochromene. Epoxidation by fscF and rearrangement reactions of chromene double bonds convert compound desacetylfusarochromene to fusarochromanones. Although specific acetyltransferases were not found near the fsc gene cluster, several predicted enzymes containing the N-acetyltransferase superfamily domain are present in the genome of F.equiseti. These predicted enzymes may have the potential to convert desacetylfusarochromene to fusarochromene. The protein is Oxidoreductase fscI of Fusarium equiseti (Fusarium scirpi).